Consider the following 100-residue polypeptide: Urease subunit gamma (100 aa).

The protein belongs to the urease gamma subunit family. Heterotrimer of UreA (gamma), UreB (beta) and UreC (alpha) subunits. Three heterotrimers associate to form the active enzyme.

It is found in the cytoplasm. It catalyses the reaction urea + 2 H2O + H(+) = hydrogencarbonate + 2 NH4(+). The protein operates within nitrogen metabolism; urea degradation; CO(2) and NH(3) from urea (urease route): step 1/1. The sequence is that of Urease subunit gamma from Bordetella bronchiseptica (strain ATCC BAA-588 / NCTC 13252 / RB50) (Alcaligenes bronchisepticus).